A 466-amino-acid chain; its full sequence is Ras-GEF domain-containing family member 1C (466 aa).

Disordered stretches follow at residues 1-35 and 443-466; these read MPRTLTASDMVTPGSLSPPPTESTEGEQAGQPLLD and SESPESQTEKERWKSLRSSILGKT. An N-terminal Ras-GEF domain is found at 34 to 164; the sequence is LDGAPSSASL…LLQTLHQKLA (131 aa). Positions 200–446 constitute a Ras-GEF domain; sequence DPYTLAQQLT…YLASYESESP (247 aa).

In terms of biological role, guanine nucleotide exchange factor (GEF). The chain is Ras-GEF domain-containing family member 1C (Rasgef1c) from Mus musculus (Mouse).